A 216-amino-acid polypeptide reads, in one-letter code: MATKLTERQQEILDLIRQTVARTGFPPTRAEIAQALGFRSPNAAEDHLKALARKGAIELTAGASRGIRLKVPDNAAPSAQLTHPLLAQLVLPLVGRVAAGSPILASEHVEREVGVDPGLFTQTPDYLLKVRGMSMRDAGILEGDLLAVKRAAEARNGQIVVARLGDEVTVKRLQRQNGRIELLPENPDFSPIVVANTDDFALEGIAVGLIRTQPLH.

A DNA-binding region (H-T-H motif) is located at residues arginine 29–lysine 49. Residues serine 134 and lysine 171 each act as for autocatalytic cleavage activity in the active site.

This sequence belongs to the peptidase S24 family. Homodimer.

The catalysed reaction is Hydrolysis of Ala-|-Gly bond in repressor LexA.. In terms of biological role, represses a number of genes involved in the response to DNA damage (SOS response), including recA and lexA. In the presence of single-stranded DNA, RecA interacts with LexA causing an autocatalytic cleavage which disrupts the DNA-binding part of LexA, leading to derepression of the SOS regulon and eventually DNA repair. This chain is LexA repressor, found in Bordetella parapertussis (strain 12822 / ATCC BAA-587 / NCTC 13253).